The primary structure comprises 1050 residues: Integrin alpha-5 (1050 aa).

The N-terminal stretch at 1–32 is a signal peptide; sequence MQLPRGSRVPGLVATFLFPVLCALLTFSSVRG. Residues 33 to 996 are Extracellular-facing; it reads FNLAVEQPAV…IHWAKPESSY (964 aa). FG-GAP repeat units follow at residues 34 to 99, 116 to 175, 183 to 235, 249 to 301, 302 to 367, 368 to 426, and 430 to 493; these read NLAV…GTNC, DTPQ…NFTT, RTDF…QEAY, QTRQ…GTDL, RSLY…MEST, PHLI…GVDS, and QVLQ…ISPN. N-linked (GlcNAc...) asparagine glycosylation is found at N75, N95, and N98. 2 cysteine pairs are disulfide-bonded: C90/C99 and C145/C166. The N-linked (GlcNAc...) asparagine glycan is linked to N172. C182 and C195 are disulfide-bonded. Positions 270, 272, 274, 276, and 278 each coordinate Ca(2+). Residues N287, N297, and N306 are each glycosylated (N-linked (GlcNAc...) asparagine). Positions 324, 326, 328, 330, 332, 390, 392, 394, 398, 454, 456, 458, 460, and 462 each coordinate Ca(2+). An intrachain disulfide couples C502 to C513. N507, N515, N521, and N600 each carry an N-linked (GlcNAc...) asparagine glycan. The cysteines at positions 519 and 575 are disulfide-linked. The cysteines at positions 636 and 642 are disulfide-linked. N649, N714, N763, and N861 each carry an N-linked (GlcNAc...) asparagine glycan. A disulfide bond links C708 and C721. 3 cysteine pairs are disulfide-bonded: C839/C958, C862/C922, and C910/C917. The helical transmembrane segment at 997 to 1022 threads the bilayer; sequence GVPLWIIILAILIGLLLLALLIYVLY. Residues 1023 to 1050 lie on the Cytoplasmic side of the membrane; sequence KLGFFKRSYQYGTAMEKAELKPQAASEA. Residues 1025 to 1029 carry the GFFKR motif motif; the sequence is GFFKR.

Belongs to the integrin alpha chain family. Heterodimer of an alpha and a beta subunit. The alpha subunit is composed of a heavy and a light chain linked by a disulfide bond. Alpha-5 associates with beta-1.

It localises to the cell membrane. The protein localises to the cell junction. It is found in the focal adhesion. Functionally, integrin alpha-5/beta-1 (ITGA5:ITGB1) is a receptor for fibronectin. It recognizes the sequence R-G-D in its ligands. ITGA5:ITGB1 acts as a receptor for fibrillin-1 (FBN1) and mediates R-G-D-dependent cell adhesion to FBN1. ITGA5:ITGB1 acts as a receptor for fibronectin (FN1) and mediates R-G-D-dependent cell adhesion to FN1. ITGA5:ITGB1 is a receptor for IL1B and binding is essential for IL1B signaling. ITGA5:ITGB3 is a receptor for soluble CD40LG and is required for CD40/CD40LG signaling. The chain is Integrin alpha-5 (itga5) from Xenopus laevis (African clawed frog).